The chain runs to 199 residues: Protein GrpE (199 aa).

The span at 1 to 24 (MSKQNKKDWKKFRDEHKEEHKVEN) shows a compositional bias: basic and acidic residues. The disordered stretch occupies residues 1–52 (MSKQNKKDWKKFRDEHKEEHKVENEILEEETDEESQHQEPALGHPSYTALEE).

The protein belongs to the GrpE family. As to quaternary structure, homodimer.

The protein localises to the cytoplasm. Participates actively in the response to hyperosmotic and heat shock by preventing the aggregation of stress-denatured proteins, in association with DnaK and GrpE. It is the nucleotide exchange factor for DnaK and may function as a thermosensor. Unfolded proteins bind initially to DnaJ; upon interaction with the DnaJ-bound protein, DnaK hydrolyzes its bound ATP, resulting in the formation of a stable complex. GrpE releases ADP from DnaK; ATP binding to DnaK triggers the release of the substrate protein, thus completing the reaction cycle. Several rounds of ATP-dependent interactions between DnaJ, DnaK and GrpE are required for fully efficient folding. The protein is Protein GrpE of Legionella pneumophila (strain Lens).